Consider the following 365-residue polypeptide: Spore germination protein A2 (365 aa).

11 consecutive transmembrane segments (helical) span residues 12–32 (TFQG…LTLP), 45–65 (WITL…NTLI), 85–105 (WIGS…ASFE), 122–142 (PIQV…VGGL), 148–168 (LFPF…GISF), 187–207 (IANS…MLFL), 223–243 (LGFL…VGAL), 250–270 (TLIW…IFIE), 275–295 (FLLV…GYFA), 303–323 (FGLS…YFSL), and 338–358 (LGYI…IVAL).

Belongs to the amino acid-polyamine-organocation (APC) superfamily. Spore germination protein (SGP) (TC 2.A.3.9) family.

It localises to the cell membrane. Involved in the germinative response to L-alanine. Could be an amino acid transporter. Forms a complex at the inner spore membrane which acts as a receptor for L-alanine, thus is involved in the stimulation of germination in response to alanine. Can stimulate germination in the absence of gerD and gerK gene products (fructose and glucose receptors, respectively), but the response is improved in their presence. This chain is Spore germination protein A2 (gerAB), found in Bacillus subtilis (strain 168).